Consider the following 483-residue polypeptide: MGNEVRVRYAPSPTGHLHIGNARTALFNYLFARSQGGKFIIRIEDTDQKRNVEGGEESQLRHLQWLGIDWDESIDKDGGYGPYRQSERNDIYKKYYDELLEKDLAYKCYCTAEELEEEREAQIARSEMPRYSGKCSHLSKEEEDKLIAEGREPSIRFRVPKGEIIKFDDMVKGEISFETDGIGDFVIVKKDGTPTYNFAVAVDDHLMKMTHILRGEDHISNTPKQIMIFNAFGWDVPLFGHMTLIVNENRKKLSKRDESIIQFIEQYKNLGYLPEALFNFIALLGWSPVGEEELFTKEQFIDIFDVNRLSKSPALFDMHKLKWVNNQYVKALDLDQVVALTLPHLQKAGKVSEQLSDEKNTWVRKLIALYHEQLSYGAEIVELTELFFKEQIEYNQEAKEVLAEEQVPEVMASFAGQLERLESFTPDEIKAAIKAVQKETGHKGKKLFMPIRVAVTGQTHGPELPQSIELLGKETVLNRIKQI.

Residues 11–21 carry the 'HIGH' region motif; the sequence is PSPTGHLHIGN. Residues Cys-108, Cys-110, Cys-135, and His-137 each coordinate Zn(2+). Positions 252–256 match the 'KMSKS' region motif; that stretch reads KLSKR. ATP is bound at residue Lys-255.

It belongs to the class-I aminoacyl-tRNA synthetase family. Glutamate--tRNA ligase type 1 subfamily. Monomer. Zn(2+) serves as cofactor.

The protein localises to the cytoplasm. The catalysed reaction is tRNA(Glu) + L-glutamate + ATP = L-glutamyl-tRNA(Glu) + AMP + diphosphate. Functionally, catalyzes the attachment of glutamate to tRNA(Glu) in a two-step reaction: glutamate is first activated by ATP to form Glu-AMP and then transferred to the acceptor end of tRNA(Glu). The protein is Glutamate--tRNA ligase of Bacillus pumilus (strain SAFR-032).